Reading from the N-terminus, the 70-residue chain is Dermaseptin-PH (70 aa).

An N-terminal signal peptide occupies residues 1-22 (MDILKKSLFLILFLGVVSLSIC). Residues 23 to 44 (EEEKRENEEEMEQDDEQSEMKR) constitute a propeptide that is removed on maturation. Q67 carries the post-translational modification Glutamine amide. Residues 68-70 (GGQ) constitute a propeptide that is removed on maturation.

It belongs to the frog skin active peptide (FSAP) family. In terms of tissue distribution, expressed by the skin glands.

Its subcellular location is the secreted. It is found in the target cell membrane. Antimicrobial peptide which inhibits the growth of Gram-negative (MIC=16-64 uM) and Gram-positive bacteria (MIC=32 uM), and pathogenic yeast Candida albicans (MIC=16 uM). Shows a broad-spectrum of anticancer activities against several cancer cell lines. Also shows slight cytotoxicity on human dermal microvascular endothelium cells (IC(50)=4.85 uM). Induces low hemolysis against horse erythrocytes. The sequence is that of Dermaseptin-PH from Pithecopus hypochondrialis (Orange-legged leaf frog).